A 259-amino-acid chain; its full sequence is Peroxisomal membrane protein 11B (259 aa).

Lys43 is modified (N6-acetyllysine). The tract at residues 211-259 (VVRNACDLFIPLDKLGLWRCGPGIVGLCGLVSSILSILTLIYPWLRLKP) is interaction with PEX19, PEX11G and FIS1 and peroxisome targeting. Residues 234 to 254 (IVGLCGLVSSILSILTLIYPW) traverse the membrane as a helical segment.

It belongs to the peroxin-11 family. Homodimer. Heterodimer with PEX11G. Interacts with PEX19. Interacts with FIS1.

The protein localises to the peroxisome membrane. Functionally, involved in peroxisomal proliferation. May regulate peroxisome division by recruiting the dynamin-related GTPase DNM1L to the peroxisomal membrane. Promotes membrane protrusion and elongation on the peroxisomal surface. The polypeptide is Peroxisomal membrane protein 11B (PEX11B) (Pongo abelii (Sumatran orangutan)).